A 311-amino-acid polypeptide reads, in one-letter code: ATP synthase subunit a (311 aa).

Transmembrane regions (helical) follow at residues 62–82, 123–143, 170–190, 213–233, 253–273, and 276–296; these read AVHV…GFIF, IAPM…MDLI, DPNA…MFSI, LWYL…VALI, IFIL…VGGV, and WAWA…FMVL.

Belongs to the ATPase A chain family. As to quaternary structure, F-type ATPases have 2 components, CF(1) - the catalytic core - and CF(0) - the membrane proton channel. CF(1) has five subunits: alpha(3), beta(3), gamma(1), delta(1), epsilon(1). CF(0) has three main subunits: a(1), b(2) and c(9-12). The alpha and beta chains form an alternating ring which encloses part of the gamma chain. CF(1) is attached to CF(0) by a central stalk formed by the gamma and epsilon chains, while a peripheral stalk is formed by the delta and b chains.

It is found in the cell inner membrane. Key component of the proton channel; it plays a direct role in the translocation of protons across the membrane. This chain is ATP synthase subunit a, found in Saccharophagus degradans (strain 2-40 / ATCC 43961 / DSM 17024).